A 319-amino-acid polypeptide reads, in one-letter code: Tetrahydromethanopterin S-methyltransferase subunit H (319 aa).

The protein belongs to the MtrH family. As to quaternary structure, the complex is composed of 8 subunits; MtrA, MtrB, MtrC, MtrD, MtrE, MtrF, MtrG and MtrH.

It carries out the reaction 5-methyl-5,6,7,8-tetrahydromethanopterin + coenzyme M + 2 Na(+)(in) = 5,6,7,8-tetrahydromethanopterin + methyl-coenzyme M + 2 Na(+)(out). Its pathway is one-carbon metabolism; methanogenesis from CO(2); methyl-coenzyme M from 5,10-methylene-5,6,7,8-tetrahydromethanopterin: step 2/2. In terms of biological role, part of a complex that catalyzes the formation of methyl-coenzyme M and tetrahydromethanopterin from coenzyme M and methyl-tetrahydromethanopterin. This is an energy-conserving, sodium-ion translocating step. MtrH catalyzes the transfer of the methyl group from methyl-tetrahydromethanopterin to the corrinoid prosthetic group of MtrA. The chain is Tetrahydromethanopterin S-methyltransferase subunit H from Methanococcus aeolicus (strain ATCC BAA-1280 / DSM 17508 / OCM 812 / Nankai-3).